Here is a 419-residue protein sequence, read N- to C-terminus: Tyrosine--tRNA ligase (419 aa).

Tyr-34 contributes to the L-tyrosine binding site. Residues 39 to 48 (PTADSLHIGN) carry the 'HIGH' region motif. Positions 169 and 173 each coordinate L-tyrosine. A 'KMSKS' region motif is present at residues 230 to 234 (KFGKT). Lys-233 contributes to the ATP binding site. The 68-residue stretch at 352 to 419 (VPLVELLVSA…KKKYYLIRYA (68 aa)) folds into the S4 RNA-binding domain.

Belongs to the class-I aminoacyl-tRNA synthetase family. TyrS type 1 subfamily. In terms of assembly, homodimer.

It is found in the cytoplasm. The catalysed reaction is tRNA(Tyr) + L-tyrosine + ATP = L-tyrosyl-tRNA(Tyr) + AMP + diphosphate + H(+). Its function is as follows. Catalyzes the attachment of tyrosine to tRNA(Tyr) in a two-step reaction: tyrosine is first activated by ATP to form Tyr-AMP and then transferred to the acceptor end of tRNA(Tyr). This Geobacillus kaustophilus (strain HTA426) protein is Tyrosine--tRNA ligase.